Reading from the N-terminus, the 92-residue chain is Large ribosomal subunit protein bL31 (92 aa).

Positions 66-92 (GMGSANPDVDAPAPKKAAKKSDAESDS) are disordered. Low complexity predominate over residues 70-80 (ANPDVDAPAPK).

It belongs to the bacterial ribosomal protein bL31 family. Type A subfamily. Part of the 50S ribosomal subunit.

Functionally, binds the 23S rRNA. The sequence is that of Large ribosomal subunit protein bL31 from Synechococcus sp. (strain RCC307).